The chain runs to 388 residues: Oligogalacturonate lyase (388 aa).

The protein localises to the periplasm. The catalysed reaction is 4-(4-deoxy-alpha-D-galact-4-enuronosyl)-D-galacturonate = 2 5-dehydro-4-deoxy-D-glucuronate. It participates in glycan metabolism; pectin degradation; 2-dehydro-3-deoxy-D-gluconate from pectin: step 3/5. Functionally, involved in degradation of pectin, which causes soft-rod disease in plants. This is Oligogalacturonate lyase (ogl) from Dickeya dadantii (strain 3937) (Erwinia chrysanthemi (strain 3937)).